Consider the following 693-residue polypeptide: Elongation factor G 1 (693 aa).

A tr-type G domain is found at 4 to 281; it reads NKLRNIGISA…AVTRFLPSPH (278 aa). Residues 13–20, 80–84, and 134–137 each bind GTP; these read AHIDSGKT, DTPGH, and NKCD.

This sequence belongs to the TRAFAC class translation factor GTPase superfamily. Classic translation factor GTPase family. EF-G/EF-2 subfamily.

The protein localises to the cytoplasm. Catalyzes the GTP-dependent ribosomal translocation step during translation elongation. During this step, the ribosome changes from the pre-translocational (PRE) to the post-translocational (POST) state as the newly formed A-site-bound peptidyl-tRNA and P-site-bound deacylated tRNA move to the P and E sites, respectively. Catalyzes the coordinated movement of the two tRNA molecules, the mRNA and conformational changes in the ribosome. This is Elongation factor G 1 from Borreliella afzelii (strain PKo) (Borrelia afzelii).